Here is a 459-residue protein sequence, read N- to C-terminus: Anthocyanidin 3-O-glucoside 2''-O-glucosyltransferase (459 aa).

The active-site Proton acceptor is histidine 20. Residue histidine 20 participates in an anthocyanidin binding. The Charge relay role is filled by aspartate 117. Residues threonine 138, valine 335, glutamine 337, histidine 352, tryptophan 355, serine 357, and glutamate 360 each contribute to the UDP-alpha-D-glucose site. An anthocyanidin is bound at residue glycine 375. Aspartate 376 and glutamine 377 together coordinate UDP-alpha-D-glucose.

This sequence belongs to the UDP-glycosyltransferase family.

It catalyses the reaction an anthocyanidin 3-O-beta-D-glucoside + UDP-alpha-D-glucose = an anthocyanidin 3-O-sophoroside + UDP + 2 H(+). It functions in the pathway pigment biosynthesis; anthocyanin biosynthesis. Its function is as follows. Glycosyltransferase that mediates the glucosylation of anthocyanidin 3-O-glucosides to yield anthocyanidin 3-O-sophorosides. 3-O-sophoroside derivatives are required for the color of flowers. The protein is Anthocyanidin 3-O-glucoside 2''-O-glucosyltransferase (3GGT) of Ipomoea purpurea (Common morning glory).